A 599-amino-acid chain; its full sequence is RING finger protein unkempt (599 aa).

C3H1-type zinc fingers lie at residues 71–100, 111–141, 194–220, 230–264, and 272–300; these read YSAD…HRTA, YYKT…HGMQ, NYKT…HNSK, KYRS…HTRT, and IYKS…HVEP. The residue at position 411 (serine 411) is a Phosphoserine. The RING-type zinc finger occupies 556-591; it reads CMKCEENNRTVTLEPCNHLSICNTCAESVTECPYCQ.

The protein belongs to the unkempt family. As to expression, ubiquitous in most somatic tissues from syncytial embryo through to embryo stage 15. Expression becomes restricted predominantly to the CNS at stages 16 and 17.

The protein localises to the cytoplasm. Essential for late larval/early pupal development. This chain is RING finger protein unkempt (unk), found in Drosophila melanogaster (Fruit fly).